Consider the following 589-residue polypeptide: Cytochrome P450 monooxygenase TRI13 (589 aa).

Positions 1–21 are cleaved as a signal peptide; it reads MFLSLCLMVLALYLLYKWALP. Residues Asn52, Asn219, Asn243, and Asn366 are each glycosylated (N-linked (GlcNAc...) asparagine). A heme-binding site is contributed by Cys531.

Belongs to the cytochrome P450 family. Heme serves as cofactor.

Its pathway is sesquiterpene biosynthesis; trichothecene biosynthesis. Its function is as follows. Cytochrome P450 monooxygenase; part of the core gene cluster that mediates the biosynthesis of trichothecenes, a very large family of chemically related bicyclic sesquiterpene compounds acting as mycotoxins, including T2-toxin. The biosynthesis of trichothecenes begins with the cyclization of farnesyl diphosphate to trichodiene and is catalyzed by the trichodiene synthase TRI5. Trichodiene undergoes a series of oxygenations catalyzed by the cytochrome P450 monooxygenase TRI4. TRI4 controls the addition of four oxygens at C-2, C-3, C-11, and the C-12, C-13-epoxide to form the intermediate isotrichotriol. Isotrichotriol then undergoes a non-enzymatic isomerization and cyclization to form isotrichodermol. During this process, the oxygen at the C-2 position becomes the pyran ring oxygen and the hydroxyl group at C-11 is lost. More complex type A trichothecenes are built by modifying isotrichodermol through a series of paired hydroxylation and acetylation or acylation steps. Isotrichodermol is converted to isotrichodermin by the acetyltransferase TRI101. TRI101 encodes a C-3 transacetylase that acts as a self-protection or resistance factor during biosynthesis and that the presence of a free C-3 hydroxyl group is a key component of Fusarium trichothecene phytotoxicity. A second hydroxyl group is added to C-15 by the trichothecene C-15 hydroxylase TRI11, producing 15-decalonectrin, which is then acetylated by TRI3, producing calonectrin. A third hydroxyl group is added at C-4 by the cytochrome P450 monooxygenase TRI13, converting calonectrin to 3,15-diacetoxyspirpenol, which is subsequently acetylated by the acetyltransferase TRI7. A fourth hydroxyl group is added to C-8 by the cytochrome P450 monooxygenase TRI1, followed by the addition of an isovaleryl moiety by TRI16. Finally, the acetyl group is removed from the C-3 position by the trichothecene C-3 esterase TRI8 to produce T-2 toxin. This Fusarium sporotrichioides protein is Cytochrome P450 monooxygenase TRI13.